Reading from the N-terminus, the 119-residue chain is uncharacterized protein (119 aa).

2 helical membrane passes run 57–77 (FSHH…SILF) and 80–100 (YIFV…FILH).

It localises to the membrane. This is an uncharacterized protein from Saccharomyces cerevisiae (strain ATCC 204508 / S288c) (Baker's yeast).